The following is a 90-amino-acid chain: Large ribosomal subunit protein bL27 (90 aa).

It belongs to the bacterial ribosomal protein bL27 family.

The chain is Large ribosomal subunit protein bL27 from Paracoccus denitrificans (strain Pd 1222).